The following is a 502-amino-acid chain: ATP synthase subunit alpha (502 aa).

169 to 176 (GDRQTGKT) serves as a coordination point for ATP.

It belongs to the ATPase alpha/beta chains family. In terms of assembly, F-type ATPases have 2 components, CF(1) - the catalytic core - and CF(0) - the membrane proton channel. CF(1) has five subunits: alpha(3), beta(3), gamma(1), delta(1), epsilon(1). CF(0) has three main subunits: a(1), b(2) and c(9-12). The alpha and beta chains form an alternating ring which encloses part of the gamma chain. CF(1) is attached to CF(0) by a central stalk formed by the gamma and epsilon chains, while a peripheral stalk is formed by the delta and b chains.

It localises to the cell inner membrane. The enzyme catalyses ATP + H2O + 4 H(+)(in) = ADP + phosphate + 5 H(+)(out). Produces ATP from ADP in the presence of a proton gradient across the membrane. The alpha chain is a regulatory subunit. The chain is ATP synthase subunit alpha from Oleidesulfovibrio alaskensis (strain ATCC BAA-1058 / DSM 17464 / G20) (Desulfovibrio alaskensis).